A 170-amino-acid chain; its full sequence is Acetyl-CoA decarbonylase/synthase complex subunit epsilon 2 (170 aa).

Belongs to the CdhB family. In terms of assembly, heterotetramer of two alpha and two epsilon subunits. The ACDS complex is made up of alpha, epsilon, beta, gamma and delta subunits with a probable stoichiometry of (alpha(2)epsilon(2))(4)-beta(8)-(gamma(1)delta(1))(8).

It participates in one-carbon metabolism; methanogenesis from acetate. Part of a complex that catalyzes the reversible cleavage of acetyl-CoA, allowing growth on acetate as sole source of carbon and energy. The alpha-epsilon subcomponent functions as a carbon monoxide dehydrogenase. The precise role of the epsilon subunit is unclear; it may have a stabilizing role within the alpha(2)epsilon(2) component and/or be involved in electron transfer to FAD during a potential FAD-mediated CO oxidation. This chain is Acetyl-CoA decarbonylase/synthase complex subunit epsilon 2 (cdhB2), found in Methanosarcina mazei (strain ATCC BAA-159 / DSM 3647 / Goe1 / Go1 / JCM 11833 / OCM 88) (Methanosarcina frisia).